Consider the following 406-residue polypeptide: Vacuole membrane protein 1 (406 aa).

Residues 1-20 (MAENGKNCDQRRVAMNKEQH) are compositionally biased toward basic and acidic residues. Residues 1 to 36 (MAENGKNCDQRRVAMNKEQHNGNFTDPSSVNEKKRR) form a disordered region. Alanine 2 carries the post-translational modification N-acetylalanine. At 2–43 (AENGKNCDQRRVAMNKEQHNGNFTDPSSVNEKKRREREERQN) the chain is on the cytoplasmic side. Polar residues predominate over residues 21–30 (NGNFTDPSSV). Residues 44 to 64 (IVLWRQPLITLQYFSLEILVI) traverse the membrane as a helical segment. Over 65-77 (LKEWTSKLWHRQS) the chain is Extracellular. The chain crosses the membrane as a helical span at residues 78–98 (IVVSFLLLLAVLIATYYVEGA). Topologically, residues 99 to 109 (HQQYVQRIEKQ) are cytoplasmic. Residues 110–130 (FLLYAYWIGLGILSSVGLGTG) traverse the membrane as a helical segment. At 131-250 (LHTFLLYLGP…ASRAKLAVQK (120 aa)) the chain is on the extracellular side. Residues 173 to 316 (GTEGTISLWS…FVIITFSKHI (144 aa)) form a VTT domain region. A helical transmembrane segment spans residues 251–271 (LVQKVGFFGILACASIPNPLF). The Cytoplasmic portion of the chain corresponds to 272-273 (DL). Residues 274-294 (AGITCGHFLVPFWTFFGATLI) form a helical membrane-spanning segment. Topologically, residues 295–305 (GKAIIKMHIQK) are extracellular. Residues 306–326 (IFVIITFSKHIVEQMVAFIGA) traverse the membrane as a helical segment. Over 327–363 (VPGIGPSLQKPFQEYLEAQRQKLHHKSEMGTPQGENW) the chain is Cytoplasmic. The chain crosses the membrane as a helical span at residues 364 to 384 (LSWMFEKLVVVMVCYFILSII). Topologically, residues 385–406 (NSMAQSYAKRIQQRLNSEEKTK) are extracellular.

This sequence belongs to the VMP1 family. Interacts with BECN1. Interacts with TJP1. Interacts with TP53INP2. Interacts with TMEM41B. Interacts with ATP2A2, PLN and SLN; competes with PLN and SLN to prevent them from forming an inhibitory complex with ATP2A2. Interacts with ATG2A.

It localises to the endoplasmic reticulum-Golgi intermediate compartment membrane. Its subcellular location is the cell membrane. The protein localises to the vacuole membrane. It is found in the endoplasmic reticulum membrane. The enzyme catalyses a 1,2-diacyl-sn-glycero-3-phospho-L-serine(in) = a 1,2-diacyl-sn-glycero-3-phospho-L-serine(out). It carries out the reaction cholesterol(in) = cholesterol(out). It catalyses the reaction a 1,2-diacyl-sn-glycero-3-phosphocholine(in) = a 1,2-diacyl-sn-glycero-3-phosphocholine(out). The catalysed reaction is a 1,2-diacyl-sn-glycero-3-phosphoethanolamine(in) = a 1,2-diacyl-sn-glycero-3-phosphoethanolamine(out). Its function is as follows. Phospholipid scramblase involved in lipid homeostasis and membrane dynamics processes. Has phospholipid scramblase activity toward cholesterol and phosphatidylserine, as well as phosphatidylethanolamine and phosphatidylcholine. Required for autophagosome formation: participates in early stages of autophagosome biogenesis at the endoplasmic reticulum (ER) membrane by reequilibrating the leaflets of the ER as lipids are extracted by ATG2 (ATG2A or ATG2B) to mediate autophagosome assembly. Regulates ATP2A2 activity to control ER-isolation membrane contacts for autophagosome formation. In addition to autophagy, involved in other processes in which phospholipid scramblase activity is required. Modulates ER contacts with lipid droplets, mitochondria and endosomes. Plays an essential role in formation of cell junctions. Upon stress such as bacterial and viral infection, promotes formation of cytoplasmic vacuoles followed by cell death. Involved in the cytoplasmic vacuolization of acinar cells during the early stage of acute pancreatitis. The protein is Vacuole membrane protein 1 of Pongo abelii (Sumatran orangutan).